Here is a 134-residue protein sequence, read N- to C-terminus: Protein Turandot E (134 aa).

Positions 1 to 38 are cleaved as a signal peptide; it reads MSYTRTVHSSTSILKMNSALQISCLLVVLGCLLGSGHC.

The protein belongs to the Turandot family.

Its subcellular location is the secreted. A humoral factor that may play a role in stress tolerance. The sequence is that of Protein Turandot E from Drosophila simulans (Fruit fly).